A 359-amino-acid chain; its full sequence is uncharacterized protein (359 aa).

It belongs to the glycosyltransferase group 1 family. Glycosyltransferase 4 subfamily.

This is an uncharacterized protein from Bacillus subtilis (strain 168).